The primary structure comprises 1112 residues: Plasma membrane calcium-transporting ATPase 2 (1112 aa).

Topologically, residues 1-94 (MGDMSNSDFY…NLIPPKKPKT (94 aa)) are cytoplasmic. The chain crosses the membrane as a helical span at residues 95-115 (FLQLVWEALQDVTLIILEIAA). The Extracellular portion of the chain corresponds to 116–152 (LISLGLSFYHPPGETGGESCGAAAGGVEDEGEADAGW). The chain crosses the membrane as a helical span at residues 153–173 (IEGAAILLSVVCVVLVTAFND). Residues 174-373 (WSKEKQFRGL…KEKSVLQGKL (200 aa)) are Cytoplasmic-facing. Residues 298–311 (EKKEKKGGAVEDGH) show a composition bias toward basic and acidic residues. The disordered stretch occupies residues 298-363 (EKKEKKGGAV…KERKKVSAPK (66 aa)). Residues 312-327 (QNTGKMQDGNMESNQI) are compositionally biased toward polar residues. Residues 351-363 (ADEKERKKVSAPK) show a composition bias toward basic and acidic residues. The helical transmembrane segment at 374–393 (TKLAVQIGKAGLLMSAITVI) threads the bilayer. Over 394–426 (ILVLYFAIDNFVMQKRPWMPECTPIYIQYFVKF) the chain is Extracellular. Residues 427-444 (FIIGVTVLVVAVPEGLPL) traverse the membrane as a helical segment. Topologically, residues 445–858 (AVTISLAYSV…MWGRNVYDSI (414 aa)) are cytoplasmic. Asp-482 serves as the catalytic 4-aspartylphosphate intermediate. Asp-803 and Asp-807 together coordinate Mg(2+). Residues 859–878 (SKFLQFQLTVNVVAVIVAFT) form a helical membrane-spanning segment. Over 879-888 (GACITQDSPL) the chain is Extracellular. A helical membrane pass occupies residues 889 to 909 (KAVQMLWVNLIMDTFASLALA). Over 910-929 (TEPPTESLLKRKPYGRNKPL) the chain is Cytoplasmic. A helical transmembrane segment spans residues 930-952 (ISSTMTKNILGHGVYQLIIIFTL). Over 953–970 (LFVGEQIFDIDSGRNAPL) the chain is Extracellular. A helical membrane pass occupies residues 971-992 (HSPPSEHYTIIFNTFVMMQLFN). The Cytoplasmic segment spans residues 993 to 1011 (EINARKIHGERNVFDGIFR). A helical membrane pass occupies residues 1012–1033 (NPIFCSIVFGTFAVQIVIVQFG). Residues 1034 to 1043 (GKPFSCQPLD) lie on the Extracellular side of the membrane. The chain crosses the membrane as a helical span at residues 1044-1065 (LEKWMWCVFLGLGELVWGQVIA). The Cytoplasmic segment spans residues 1066-1112 (TIPNSRLRFLRRAGQLTQKDELPEEDVNEENEEIDHAERELRRGQIL). The tract at residues 1086–1112 (ELPEEDVNEENEEIDHAERELRRGQIL) is disordered. The segment covering 1087-1098 (LPEEDVNEENEE) has biased composition (acidic residues). Positions 1099-1112 (IDHAERELRRGQIL) are enriched in basic and acidic residues. The segment at 1106 to 1112 (LRRGQIL) is calmodulin-binding subdomain A.

The protein belongs to the cation transport ATPase (P-type) (TC 3.A.3) family. Type IIB subfamily.

The protein resides in the cell membrane. It carries out the reaction Ca(2+)(in) + ATP + H2O = Ca(2+)(out) + ADP + phosphate + H(+). This magnesium-dependent enzyme catalyzes the hydrolysis of ATP coupled with the transport of calcium out of the cell. This is Plasma membrane calcium-transporting ATPase 2 (atp2b2) from Oreochromis mossambicus (Mozambique tilapia).